The sequence spans 273 residues: Large ribosomal subunit protein uL2 (273 aa).

A disordered region spans residues 221 to 263; sequence RGTAMNPVDHPHGGGEGRNFGKHPVTPWGVQTKGKKTRHNKRT. Residues 253–263 show a composition bias toward basic residues; it reads KGKKTRHNKRT.

Belongs to the universal ribosomal protein uL2 family. Part of the 50S ribosomal subunit. Forms a bridge to the 30S subunit in the 70S ribosome.

One of the primary rRNA binding proteins. Required for association of the 30S and 50S subunits to form the 70S ribosome, for tRNA binding and peptide bond formation. It has been suggested to have peptidyltransferase activity; this is somewhat controversial. Makes several contacts with the 16S rRNA in the 70S ribosome. The protein is Large ribosomal subunit protein uL2 of Histophilus somni (strain 2336) (Haemophilus somnus).